The chain runs to 374 residues: Putative F-box protein At3g17480 (374 aa).

One can recognise an F-box domain in the interval Ser6–His52.

The chain is Putative F-box protein At3g17480 from Arabidopsis thaliana (Mouse-ear cress).